Consider the following 332-residue polypeptide: 2,3-diketo-L-gulonate reductase (332 aa).

Catalysis depends on His-44, which acts as the Proton donor. NAD(+)-binding positions include 168–174 (ITMVDMS), 224–225 (WK), and 304–306 (GHE).

It belongs to the LDH2/MDH2 oxidoreductase family. DlgD subfamily. As to quaternary structure, homodimer.

Its subcellular location is the cytoplasm. The catalysed reaction is 3-dehydro-L-gulonate + NAD(+) = 2,3-dioxo-L-gulonate + NADH + H(+). It carries out the reaction 3-dehydro-L-gulonate + NADP(+) = 2,3-dioxo-L-gulonate + NADPH + H(+). Catalyzes the reduction of 2,3-diketo-L-gulonate in the presence of NADH, to form 3-keto-L-gulonate. This is 2,3-diketo-L-gulonate reductase from Escherichia coli O8 (strain IAI1).